We begin with the raw amino-acid sequence, 229 residues long: E3 ubiquitin-protein ligase RNF114 (229 aa).

The disordered stretch occupies residues 1-23 (MAAAQPESRDGAAQSAKPASETD). The RING-type zinc finger occupies 30-69 (CPVCLEVFEKPVQVPCGHVFCSACLQECLKPKKPVCGVCR). Residues cysteine 92 and cysteine 95 each contribute to the Zn(2+) site. The C2HC RNF-type zinc finger occupies 92–111 (CHGCRKNFILSKIRAHVTSC). Residue lysine 103 is modified to N6-acetyllysine. Zn(2+) is bound by residues histidine 107 and cysteine 111. An N6-acetyllysine modification is found at lysine 113.

Interacts with XAF1, the interaction increases XAF1 stability and proapoptotic effects, and may regulate IFN signaling. Autoubiquitinated. Polyubiquitinated in the presence of E2 enzymes UBE2D1, UBE2D2 and UBE2D3, but only monoubiquitinated in the presence of UBE2E1.

The protein localises to the cytoplasm. The protein resides in the nucleus. It carries out the reaction S-ubiquitinyl-[E2 ubiquitin-conjugating enzyme]-L-cysteine + [acceptor protein]-L-lysine = [E2 ubiquitin-conjugating enzyme]-L-cysteine + N(6)-ubiquitinyl-[acceptor protein]-L-lysine.. It participates in protein modification; protein ubiquitination. In terms of biological role, E3 ubiquitin-protein ligase that promotes the ubiquitination of various substrates. In turn, participates in the regulation of many biological processes including cell cycle, apoptosis, osteoclastogenesis as well as innate or adaptive immunity. Acts as negative regulator of NF-kappa-B-dependent transcription by promoting the ubiquitination and stabilization of the NF-kappa-B inhibitor TNFAIP3. May promote the ubiquitination of TRAF6 as well. Also acts as a negative regulator of T-cell activation. Inhibits cellular dsRNA responses and interferon production by targeting MAVS component for proteasomal degradation. Ubiquitinates the CDK inhibitor CDKN1A leading to its degradationand probably also CDKN1B and CDKN1C. This activity stimulates cell cycle G1-to-S phase transition and suppresses cellular senescence. May play a role in spermatogenesis. This chain is E3 ubiquitin-protein ligase RNF114 (Rnf114), found in Mus musculus (Mouse).